The primary structure comprises 734 residues: MALRFPRFSQGLAQDPTTRRIWFGIATAHDFESHDDITEERLYQNIFASHFGQLAIIFLWTSGNLFHVAWQGNFESWVQDPLHVRPIAHAIWDPHFGQPAVEAFTRGGALGPVNIAYSGVYQWWYTIGLRTNEDLYTGALFLLFLSAISLIAGWLHLQPKWKPSVSWFKNAESRLNHHLSGLFGVSSLAWTGHLVHVAIPASRGEYVRWNNFLDVLPHPQGLGPLFTGQWNLYAQNPDSSSHLFGTAEGAGTAILTLLGGFHPQTQSLWLTDIAHHHLAIAFIFLVAGHMYRTNFGIGHSMKDLLDAHIPPGGRLGRGHKGLYDTINNSLHFQLGLALASLGVITSLVAQHMYSLPAYAFIAQDFTTQAALYTHHQYIAGFIMTGAFAHGAIFFIRDYNPEQNEDNVLARMLDHKEAIISHLSWASLFLGFHTLGLYVHNDVMLAFGTPEKQILIEPIFAQWIQSAHGKTSYGFDVLLSSTTGPAFNAGRSIWLPGWLNAVNENSNSLFLTIGPGDFLVHHAIALGLHTTTLILVKGALDARGSKLMPDKKDFGYSFPCDGPGRGGTCDISAWDAFYLAVFWMLNTIGWVTFYWHWKHITLWQGNVSQFNESSTYLMGWLRDYLWLNSSQLINGYNPFGMNSLSVWAWMFLFGHLVWATGFMFLISWRGYWQELIETLAWAHERTPLANLIRWRDKPVALSIVQARLVGLAHFSVGYIFTYAAFLIASTSGKFG.

Helical transmembrane passes span 46 to 69, 135 to 158, 175 to 199, 273 to 291, 330 to 353, 369 to 395, 417 to 439, and 517 to 535; these read IFASHFGQLAIIFLWTSGNLFHVA, LYTGALFLLFLSAISLIAGWLHLQ, LNHHLSGLFGVSSLAWTGHLVHVAI, IAHHHLAIAFIFLVAGHMY, LHFQLGLALASLGVITSLVAQHMY, AALYTHHQYIAGFIMTGAFAHGAIFFI, AIISHLSWASLFLGFHTLGLYVH, and FLVHHAIALGLHTTTLILV. [4Fe-4S] cluster contacts are provided by Cys559 and Cys568. A run of 2 helical transmembrane segments spans residues 575–596 and 643–665; these read AFYLAVFWMLNTIGWVTFYWHW and LSVWAWMFLFGHLVWATGFMFLI. Chlorophyll a is bound by residues His654, Met662, and Tyr670. Trp671 lines the phylloquinone pocket. A helical membrane pass occupies residues 707–727; it reads LVGLAHFSVGYIFTYAAFLIA.

The protein belongs to the PsaA/PsaB family. In terms of assembly, the PsaA/B heterodimer binds the P700 chlorophyll special pair and subsequent electron acceptors. PSI consists of a core antenna complex that captures photons, and an electron transfer chain that converts photonic excitation into a charge separation. The eukaryotic PSI reaction center is composed of at least 11 subunits. It depends on P700 is a chlorophyll a/chlorophyll a' dimer, A0 is one or more chlorophyll a, A1 is one or both phylloquinones and FX is a shared 4Fe-4S iron-sulfur center. as a cofactor.

It is found in the plastid. It localises to the chloroplast thylakoid membrane. It catalyses the reaction reduced [plastocyanin] + hnu + oxidized [2Fe-2S]-[ferredoxin] = oxidized [plastocyanin] + reduced [2Fe-2S]-[ferredoxin]. In terms of biological role, psaA and PsaB bind P700, the primary electron donor of photosystem I (PSI), as well as the electron acceptors A0, A1 and FX. PSI is a plastocyanin-ferredoxin oxidoreductase, converting photonic excitation into a charge separation, which transfers an electron from the donor P700 chlorophyll pair to the spectroscopically characterized acceptors A0, A1, FX, FA and FB in turn. Oxidized P700 is reduced on the lumenal side of the thylakoid membrane by plastocyanin. The protein is Photosystem I P700 chlorophyll a apoprotein A2 of Solanum bulbocastanum (Wild potato).